The chain runs to 394 residues: Elongation factor Tu (394 aa).

The tr-type G domain occupies 10–205 (KPHMNVGTIG…SMDNYFDLPE (196 aa)). Positions 19–26 (GHVDHGKT) are G1. 19-26 (GHVDHGKT) contacts GTP. Position 26 (Thr-26) interacts with Mg(2+). The segment at 61–65 (GITIN) is G2. The G3 stretch occupies residues 82-85 (DCPG). Residues 82–86 (DCPGH) and 137–140 (NKLD) each bind GTP. Positions 137–140 (NKLD) are G4. Residues 173–175 (SAF) form a G5 region.

It belongs to the TRAFAC class translation factor GTPase superfamily. Classic translation factor GTPase family. EF-Tu/EF-1A subfamily. In terms of assembly, monomer.

It localises to the cytoplasm. It carries out the reaction GTP + H2O = GDP + phosphate + H(+). GTP hydrolase that promotes the GTP-dependent binding of aminoacyl-tRNA to the A-site of ribosomes during protein biosynthesis. This chain is Elongation factor Tu, found in Borreliella afzelii (strain PKo) (Borrelia afzelii).